A 543-amino-acid chain; its full sequence is Excitatory amino acid transporter 1 (543 aa).

Residues 1 to 47 (MTKSNGEDPRAGSRMERFQQGVRQRTLLAKKKVQNITKDDVKGFLKR) are Cytoplasmic-facing. The helical transmembrane segment at 48–68 (NGFVLFTVIAVVVGSILGFSV) threads the bilayer. Over 69–86 (RSYHMTFRELKYFSFPGE) the chain is Extracellular. A helical membrane pass occupies residues 87 to 108 (LLMRMLQMLVLPLIVSSLVTGM). The Cytoplasmic portion of the chain corresponds to 109–122 (AALDSKASGKMGLR). Residues 123–145 (AVVYYMTTTVIAVFIGIVIVIIV) traverse the membrane as a helical segment. The Extracellular portion of the chain corresponds to 146-237 (HPGKGTKEHM…MREEMIPVPG (92 aa)). N-linked (GlcNAc...) asparagine glycans are attached at residues N206 and N217. A helical transmembrane segment spans residues 238-261 (AVNGVNALGLVVFSMCFGLVIGNM). The Cytoplasmic segment spans residues 262–270 (KEQGKALKD). The helical transmembrane segment at 271–298 (FFDSLNEAIMRLVAVIMWYAPIGILFLI) threads the bilayer. The Extracellular portion of the chain corresponds to 299-319 (AGKIAEMEDMGVVGGQLGMYT). Residues 320-341 (VTVIIGLLIHAVIVLPLLYFAV) form a helical membrane-spanning segment. Over 342–346 (TRKNP) the chain is Cytoplasmic. The discontinuously helical intramembrane region spans 347–377 (WVFIGGILQALITALGTSSSSATLPITFKCL). 364–366 (SSS) serves as a coordination point for L-aspartate. Topologically, residues 378–386 (EENNKVDKR) are cytoplasmic. The chain crosses the membrane as a helical span at residues 387–413 (VTRFVLPVGATINMDGTALYEALAAIF). Na(+) is bound by residues G395, T397, and N399. T403 provides a ligand contact to L-aspartate. Residues 414-426 (IAQVNNYDLNFGQ) lie on the Extracellular side of the membrane. An intramembrane region (discontinuously helical) is located at residues 427–460 (ILTISITATAASIGAAGIPQAGLVTMVIVLTSVG). Position 444–448 (444–448 (IPQAG)) interacts with L-aspartate. At 461-473 (LPTDDITLIIAVD) the chain is on the extracellular side. Residues 474-495 (WFLDRLRTTTNVLGDSLGAGIV) traverse the membrane as a helical segment. L-aspartate-binding residues include D477 and N484. 2 residues coordinate Na(+): N484 and D488. The Cytoplasmic segment spans residues 496 to 543 (EHLSRHELQSGDAEMGNSVIEENEMKKPYQLVSQENELEKPIDSETKM). Positions 521–543 (KKPYQLVSQENELEKPIDSETKM) are disordered. Residues 532 to 543 (ELEKPIDSETKM) are compositionally biased toward basic and acidic residues.

It belongs to the dicarboxylate/amino acid:cation symporter (DAACS) (TC 2.A.23) family. In terms of assembly, homotrimer. In terms of tissue distribution, detected in retina (at protein level).

Its subcellular location is the cell membrane. The catalysed reaction is K(+)(in) + L-glutamate(out) + 3 Na(+)(out) + H(+)(out) = K(+)(out) + L-glutamate(in) + 3 Na(+)(in) + H(+)(in). It catalyses the reaction K(+)(in) + L-aspartate(out) + 3 Na(+)(out) + H(+)(out) = K(+)(out) + L-aspartate(in) + 3 Na(+)(in) + H(+)(in). The enzyme catalyses D-aspartate(out) + K(+)(in) + 3 Na(+)(out) + H(+)(out) = D-aspartate(in) + K(+)(out) + 3 Na(+)(in) + H(+)(in). Functionally, sodium-dependent, high-affinity amino acid transporter that mediates the uptake of L-glutamate and also L-aspartate and D-aspartate. Functions as a symporter that transports one amino acid molecule together with two or three Na(+) ions and one proton, in parallel with the counter-transport of one K(+) ion. Plays a redundant role in the rapid removal of released glutamate from the synaptic cleft, which is essential for terminating the postsynaptic action of glutamate. This chain is Excitatory amino acid transporter 1 (SLC1A3), found in Ambystoma tigrinum (Eastern tiger salamander).